A 156-amino-acid chain; its full sequence is Small ribosomal subunit protein uS7 (156 aa).

It belongs to the universal ribosomal protein uS7 family. In terms of assembly, part of the 30S ribosomal subunit. Contacts proteins S9 and S11.

One of the primary rRNA binding proteins, it binds directly to 16S rRNA where it nucleates assembly of the head domain of the 30S subunit. Is located at the subunit interface close to the decoding center, probably blocks exit of the E-site tRNA. In Pelobacter propionicus (strain DSM 2379 / NBRC 103807 / OttBd1), this protein is Small ribosomal subunit protein uS7.